The sequence spans 158 residues: Cyclic pyranopterin monophosphate synthase (158 aa).

Residues 75-77 and 113-114 each bind substrate; these read LCH and ME. The active site involves Asp-128.

The protein belongs to the MoaC family. In terms of assembly, homohexamer; trimer of dimers.

It catalyses the reaction (8S)-3',8-cyclo-7,8-dihydroguanosine 5'-triphosphate = cyclic pyranopterin phosphate + diphosphate. It functions in the pathway cofactor biosynthesis; molybdopterin biosynthesis. In terms of biological role, catalyzes the conversion of (8S)-3',8-cyclo-7,8-dihydroguanosine 5'-triphosphate to cyclic pyranopterin monophosphate (cPMP). The sequence is that of Cyclic pyranopterin monophosphate synthase from Actinobacillus pleuropneumoniae serotype 5b (strain L20).